Reading from the N-terminus, the 70-residue chain is uncharacterized protein (70 aa).

It localises to the plastid. This is an uncharacterized protein from Euglena longa (Euglenophycean alga).